The primary structure comprises 298 residues: Probable GTP 3',8-cyclase (298 aa).

The Radical SAM core domain maps to 4-230 (KFGREIRSLR…RKKYIVDGLE (227 aa)). Arg-13 provides a ligand contact to GTP. [4Fe-4S] cluster-binding residues include Cys-20 and Cys-24. Tyr-26 contributes to the S-adenosyl-L-methionine binding site. [4Fe-4S] cluster is bound at residue Cys-27. Position 61 (Lys-61) interacts with GTP. Residue Gly-65 coordinates S-adenosyl-L-methionine. Residue Thr-91 participates in GTP binding. Ser-115 is an S-adenosyl-L-methionine binding site. Position 152 (Lys-152) interacts with GTP. Positions 243 and 246 each coordinate [4Fe-4S] cluster. Position 248–250 (248–250 (RIR)) interacts with GTP. Position 260 (Cys-260) interacts with [4Fe-4S] cluster.

The protein belongs to the radical SAM superfamily. MoaA family. Requires [4Fe-4S] cluster as cofactor.

It carries out the reaction GTP + AH2 + S-adenosyl-L-methionine = (8S)-3',8-cyclo-7,8-dihydroguanosine 5'-triphosphate + 5'-deoxyadenosine + L-methionine + A + H(+). Its pathway is cofactor biosynthesis; molybdopterin biosynthesis. In terms of biological role, catalyzes the cyclization of GTP to (8S)-3',8-cyclo-7,8-dihydroguanosine 5'-triphosphate. In Methanocaldococcus jannaschii (strain ATCC 43067 / DSM 2661 / JAL-1 / JCM 10045 / NBRC 100440) (Methanococcus jannaschii), this protein is Probable GTP 3',8-cyclase.